Consider the following 486-residue polypeptide: MSATGNKVFAPAIFFIAAREALEASLVIGILSGMLENLVVHTKSAEDLAAHDSLTESEKHEVEQKKRALVRKLRKIVLLGALTGLLIAFAIGAAFLAVFYTQVNDLYGKAEELWEGIFNLVAVLLITPMSLAILRAGNSKRKWKRKLENAFSHQNIQPNHRRDEEGEATVVNANHSDDSASASSSSARQAAEEEAGTKTTRTEKLNPLEAVDVVPSMSGDQRRKRGGLRGLFSKPSGAVNDLKLRMNRGTLALFTIPLITTLREGLEGVVFIGGVSLGLPATSIPLPAIVGLAVGLGIGFLIFRSGNLVSVRIFLVFSTCFLLLIASGMASRSVYYLQFYAYVQLVGDSAAESGDGPGSYNSQGYIWHFNCCNPEANKGGTGWGILNSLVGWNNTATYGSVFMYIGYWFAVAGYLWYQIWSEGRLALRFGGKTYWESNRSIQARQRKQEKAHQRQLREADQEEHGHSSNSDKQQHPSEAGPSTLSH.

Helical transmembrane passes span 76–96 (IVLL…AAFL) and 113–133 (LWEG…SLAI). The N-linked (GlcNAc...) asparagine glycan is linked to Asn174. The interval 175–209 (HSDDSASASSSSARQAAEEEAGTKTTRTEKLNPLE) is disordered. Positions 179–189 (SASASSSSARQ) are enriched in low complexity. 3 helical membrane passes run 252–272 (ALFT…VVFI), 283–303 (SIPL…FLIF), and 308–328 (LVSV…IASG). N-linked (GlcNAc...) asparagine glycosylation occurs at Asn393. Residues 400 to 420 (SVFMYIGYWFAVAGYLWYQIW) traverse the membrane as a helical segment. A glycan (N-linked (GlcNAc...) asparagine) is linked at Asn438. The disordered stretch occupies residues 441-486 (IQARQRKQEKAHQRQLREADQEEHGHSSNSDKQQHPSEAGPSTLSH). The span at 446-466 (RKQEKAHQRQLREADQEEHGH) shows a compositional bias: basic and acidic residues.

It belongs to the oxidase-dependent Fe transporter (OFeT) (TC 9.A.10.1) family.

The protein localises to the cell membrane. Functionally, permease for high affinity iron uptake. The sequence is that of High-affinity iron permease fer2 from Mycosarcoma maydis (Corn smut fungus).